The primary structure comprises 390 residues: 4-hydroxy-3-methylbut-2-en-1-yl diphosphate synthase (flavodoxin) (390 aa).

[4Fe-4S] cluster is bound by residues Cys-281, Cys-284, Cys-316, and Glu-323.

It belongs to the IspG family. Requires [4Fe-4S] cluster as cofactor.

It catalyses the reaction (2E)-4-hydroxy-3-methylbut-2-enyl diphosphate + oxidized [flavodoxin] + H2O + 2 H(+) = 2-C-methyl-D-erythritol 2,4-cyclic diphosphate + reduced [flavodoxin]. Its pathway is isoprenoid biosynthesis; isopentenyl diphosphate biosynthesis via DXP pathway; isopentenyl diphosphate from 1-deoxy-D-xylulose 5-phosphate: step 5/6. In terms of biological role, converts 2C-methyl-D-erythritol 2,4-cyclodiphosphate (ME-2,4cPP) into 1-hydroxy-2-methyl-2-(E)-butenyl 4-diphosphate. This chain is 4-hydroxy-3-methylbut-2-en-1-yl diphosphate synthase (flavodoxin), found in Salinispora tropica (strain ATCC BAA-916 / DSM 44818 / JCM 13857 / NBRC 105044 / CNB-440).